A 251-amino-acid chain; its full sequence is 3-deoxy-manno-octulosonate cytidylyltransferase (251 aa).

This sequence belongs to the KdsB family.

Its subcellular location is the cytoplasm. It carries out the reaction 3-deoxy-alpha-D-manno-oct-2-ulosonate + CTP = CMP-3-deoxy-beta-D-manno-octulosonate + diphosphate. It participates in nucleotide-sugar biosynthesis; CMP-3-deoxy-D-manno-octulosonate biosynthesis; CMP-3-deoxy-D-manno-octulosonate from 3-deoxy-D-manno-octulosonate and CTP: step 1/1. Its pathway is bacterial outer membrane biogenesis; lipopolysaccharide biosynthesis. Its function is as follows. Activates KDO (a required 8-carbon sugar) for incorporation into bacterial lipopolysaccharide in Gram-negative bacteria. This Vibrio parahaemolyticus serotype O3:K6 (strain RIMD 2210633) protein is 3-deoxy-manno-octulosonate cytidylyltransferase.